The primary structure comprises 65 residues: Trypsin inhibitor (65 aa).

In terms of assembly, homotrimer.

This chain is Trypsin inhibitor, found in Zea mays (Maize).